The chain runs to 94 residues: Co-chaperonin GroES (94 aa).

It belongs to the GroES chaperonin family. As to quaternary structure, heptamer of 7 subunits arranged in a ring. Interacts with the chaperonin GroEL.

Its subcellular location is the cytoplasm. Together with the chaperonin GroEL, plays an essential role in assisting protein folding. The GroEL-GroES system forms a nano-cage that allows encapsulation of the non-native substrate proteins and provides a physical environment optimized to promote and accelerate protein folding. GroES binds to the apical surface of the GroEL ring, thereby capping the opening of the GroEL channel. In Lactobacillus helveticus (strain DPC 4571), this protein is Co-chaperonin GroES.